The following is a 439-amino-acid chain: MNIFEHSIKNVDKGNVVAIVGTQWGDEGKGKIIDILSKYSDITCRFNGGGNAGHTICVGNKKHALHLLPCGVLYENNINILGNCMVIHLKTLMKEINNLGNNILDRIYISEKAHILFDIHQEIDAIQETRKSKDGNAIGTTKKGIGPCYSTKASRIGIRMGSLRNFENFKKLYIKLIDNLMDLYNIKDYNKEEELNEFYTYHKILKDKIINIISYINKSIDSKKYILIEGANAAMLDIDLGTYPFVTSSSTTLGGIFSGLGIHHKKLNLVVGVVKSYLTRVGSGPFLTEQCNEIGEYLTKKGFEYGTTTNRPRRCGWLDLPMLFYVKYINCIDIINLTKLDVLSGLKEIYVCVDYKNKTTGELLERGSYPLEDEQLREYEPVYEKFEGWDEDITNCIEFDELPENAKKYVLTIESYIKTPIVWVGVGPTRDNTITRKFD.

GTP-binding positions include 25 to 31, 53 to 55, and K62; these read GDEGKGK and GHT. D26 acts as the Proton acceptor in catalysis. Residues D26 and G53 each coordinate Mg(2+). IMP is bound by residues 26–29 and 51–54; these read DEGK and NAGH. H54 acts as the Proton donor in catalysis. Residues T141, R155, N232, and T247 each contribute to the IMP site. T307 is a binding site for GTP. A substrate-binding site is contributed by 307 to 313; the sequence is TTTNRPR. Residue R311 participates in IMP binding. GTP-binding positions include R313, 339–341, and 425–427; these read KLD and GVG.

This sequence belongs to the adenylosuccinate synthetase family. As to quaternary structure, homodimer. Mg(2+) serves as cofactor.

The protein resides in the cytoplasm. It catalyses the reaction IMP + L-aspartate + GTP = N(6)-(1,2-dicarboxyethyl)-AMP + GDP + phosphate + 2 H(+). It functions in the pathway purine metabolism; AMP biosynthesis via de novo pathway; AMP from IMP: step 1/2. In terms of biological role, plays an important role in the salvage pathway for purine nucleotide biosynthesis. Catalyzes the first committed step in the biosynthesis of AMP from IMP. The chain is Adenylosuccinate synthetase from Plasmodium yoelii yoelii.